The chain runs to 130 residues: MAITQNYGTGRRKSSTARVFLRKGTGKITVNDRPLDEFFGRETARMIVRQPLELTKNTESFDILVTASGGGTTGQAGAIRLGIARALVEYDETLKSELRKAGFMTRDAREVERKKVGLHKARRATQFSKR.

It belongs to the universal ribosomal protein uS9 family.

This Xanthomonas oryzae pv. oryzae (strain MAFF 311018) protein is Small ribosomal subunit protein uS9.